The sequence spans 560 residues: Protein NRT1/ PTR FAMILY 2.5 (560 aa).

The segment at 1 to 20 (MADSKSGDTEVAHRSSDPSE) is disordered. The next 12 membrane-spanning stretches (helical) occupy residues 34 to 54 (TLLG…VFLI), 77 to 97 (MLPV…PVIS), 101 to 121 (FISL…YLMP), 141 to 161 (ILYV…FTLA), 177 to 197 (FFNW…TAIV), 207 to 227 (LGFG…IAGV), 323 to 343 (AILR…PVAV), 372 to 392 (VIVL…IYPM), 404 to 424 (LQQV…SAVV), 441 to 461 (VLWL…HFPA), 480 to 500 (SLTS…IDVI), and 520 to 540 (YWVV…CSWF).

Belongs to the major facilitator superfamily. Proton-dependent oligopeptide transporter (POT/PTR) (TC 2.A.17) family. Expressed in the root epidermis or cortex.

It localises to the membrane. Functionally, transporter involved in a passive nitrate efflux. The polypeptide is Protein NRT1/ PTR FAMILY 2.5 (NPF2.5) (Arabidopsis thaliana (Mouse-ear cress)).